Reading from the N-terminus, the 444-residue chain is Phosphoglucosamine mutase (444 aa).

The Phosphoserine intermediate role is filled by Ser102. Residues Ser102, Asp241, Asp243, and Asp245 each contribute to the Mg(2+) site. At Ser102 the chain carries Phosphoserine.

The protein belongs to the phosphohexose mutase family. Requires Mg(2+) as cofactor. In terms of processing, activated by phosphorylation.

The catalysed reaction is alpha-D-glucosamine 1-phosphate = D-glucosamine 6-phosphate. Functionally, catalyzes the conversion of glucosamine-6-phosphate to glucosamine-1-phosphate. The sequence is that of Phosphoglucosamine mutase from Haemophilus ducreyi (strain 35000HP / ATCC 700724).